A 311-amino-acid polypeptide reads, in one-letter code: Methionyl-tRNA formyltransferase (311 aa).

Residue 112–115 (SLLP) participates in (6S)-5,6,7,8-tetrahydrofolate binding.

It belongs to the Fmt family.

It catalyses the reaction L-methionyl-tRNA(fMet) + (6R)-10-formyltetrahydrofolate = N-formyl-L-methionyl-tRNA(fMet) + (6S)-5,6,7,8-tetrahydrofolate + H(+). In terms of biological role, attaches a formyl group to the free amino group of methionyl-tRNA(fMet). The formyl group appears to play a dual role in the initiator identity of N-formylmethionyl-tRNA by promoting its recognition by IF2 and preventing the misappropriation of this tRNA by the elongation apparatus. This chain is Methionyl-tRNA formyltransferase, found in Bartonella henselae (strain ATCC 49882 / DSM 28221 / CCUG 30454 / Houston 1) (Rochalimaea henselae).